A 349-amino-acid chain; its full sequence is tRNA N6-adenosine threonylcarbamoyltransferase (349 aa).

Residues histidine 117, histidine 121, and tyrosine 138 each coordinate Fe cation. Residues tyrosine 138 to glycine 142, aspartate 170, aspartate 191, and asparagine 271 each bind substrate. Residue aspartate 299 participates in Fe cation binding.

The protein belongs to the KAE1 / TsaD family. Requires Fe(2+) as cofactor.

The protein localises to the cytoplasm. It catalyses the reaction L-threonylcarbamoyladenylate + adenosine(37) in tRNA = N(6)-L-threonylcarbamoyladenosine(37) in tRNA + AMP + H(+). Functionally, required for the formation of a threonylcarbamoyl group on adenosine at position 37 (t(6)A37) in tRNAs that read codons beginning with adenine. Is probably involved in the transfer of the threonylcarbamoyl moiety of threonylcarbamoyl-AMP (TC-AMP) to the N6 group of A37. The polypeptide is tRNA N6-adenosine threonylcarbamoyltransferase (Aeropyrum pernix (strain ATCC 700893 / DSM 11879 / JCM 9820 / NBRC 100138 / K1)).